Reading from the N-terminus, the 341-residue chain is L-threonine 3-dehydrogenase (341 aa).

Residue Cys-38 coordinates Zn(2+). Active-site charge relay system residues include Thr-40 and His-43. His-63, Glu-64, Cys-93, Cys-96, Cys-99, and Cys-107 together coordinate Zn(2+). NAD(+) contacts are provided by residues Ile-175, Asp-195, Arg-200, 262 to 264, and 286 to 287; these read LGI and IY.

The protein belongs to the zinc-containing alcohol dehydrogenase family. Homotetramer. Zn(2+) is required as a cofactor.

It is found in the cytoplasm. The enzyme catalyses L-threonine + NAD(+) = (2S)-2-amino-3-oxobutanoate + NADH + H(+). It functions in the pathway amino-acid degradation; L-threonine degradation via oxydo-reductase pathway; glycine from L-threonine: step 1/2. Its function is as follows. Catalyzes the NAD(+)-dependent oxidation of L-threonine to 2-amino-3-ketobutyrate. The polypeptide is L-threonine 3-dehydrogenase (Serratia proteamaculans (strain 568)).